Here is a 388-residue protein sequence, read N- to C-terminus: Branched-chain-amino-acid aminotransferase 2, chloroplastic (388 aa).

A chloroplast-targeting transit peptide spans 1-22 (MIKTITSLRKTLVLPLHLHIRT). Residue lysine 235 is modified to N6-(pyridoxal phosphate)lysine.

This sequence belongs to the class-IV pyridoxal-phosphate-dependent aminotransferase family. The cofactor is pyridoxal 5'-phosphate.

It is found in the plastid. The protein resides in the chloroplast. It carries out the reaction L-leucine + 2-oxoglutarate = 4-methyl-2-oxopentanoate + L-glutamate. The enzyme catalyses L-isoleucine + 2-oxoglutarate = (S)-3-methyl-2-oxopentanoate + L-glutamate. The catalysed reaction is L-valine + 2-oxoglutarate = 3-methyl-2-oxobutanoate + L-glutamate. It participates in amino-acid biosynthesis; L-isoleucine biosynthesis; L-isoleucine from 2-oxobutanoate: step 4/4. It functions in the pathway amino-acid biosynthesis; L-leucine biosynthesis; L-leucine from 3-methyl-2-oxobutanoate: step 4/4. The protein operates within amino-acid biosynthesis; L-valine biosynthesis; L-valine from pyruvate: step 4/4. Converts 2-oxo acids to branched-chain amino acids. Shows activity with L-Leu, L-Ile and L-Val as amino donors and 2-oxoglutarate as an amino acceptor, but no activity for D-isomers of Leu, Ile, Val, Asp, Glu or Ala. In Arabidopsis thaliana (Mouse-ear cress), this protein is Branched-chain-amino-acid aminotransferase 2, chloroplastic (BCAT2).